The following is a 244-amino-acid chain: uncharacterized protein (244 aa).

This is an uncharacterized protein from Saccharomyces cerevisiae (strain ATCC 204508 / S288c) (Baker's yeast).